The sequence spans 259 residues: Small ribosomal subunit protein eS4 (259 aa).

The region spanning 41-105 is the S4 RNA-binding domain; it reads LPLSVLLKER…TDQSFRILYD (65 aa). At T248 the chain carries Phosphothreonine. Residue S258 is modified to Phosphoserine.

It belongs to the eukaryotic ribosomal protein eS4 family.

In Tetrahymena thermophila, this protein is Small ribosomal subunit protein eS4.